The chain runs to 430 residues: Dihydroorotase (430 aa).

Positions 60 and 62 each coordinate Zn(2+). Substrate-binding positions include 62–64 (HLR) and Asn-94. The Zn(2+) site is built by Asp-152, His-179, His-232, and Asp-305. Asp-305 is a catalytic residue. Residues His-309 and 323 to 324 (FG) each bind substrate.

The protein belongs to the metallo-dependent hydrolases superfamily. DHOase family. Class I DHOase subfamily. Zn(2+) is required as a cofactor.

The catalysed reaction is (S)-dihydroorotate + H2O = N-carbamoyl-L-aspartate + H(+). Its pathway is pyrimidine metabolism; UMP biosynthesis via de novo pathway; (S)-dihydroorotate from bicarbonate: step 3/3. Catalyzes the reversible cyclization of carbamoyl aspartate to dihydroorotate. The sequence is that of Dihydroorotase from Solibacter usitatus (strain Ellin6076).